Here is a 60-residue protein sequence, read N- to C-terminus: UPF0434 protein Pnap_1922 (60 aa).

The protein belongs to the UPF0434 family.

The protein is UPF0434 protein Pnap_1922 of Polaromonas naphthalenivorans (strain CJ2).